A 267-amino-acid polypeptide reads, in one-letter code: GTP cyclohydrolase FolE2 2 (267 aa).

This sequence belongs to the GTP cyclohydrolase IV family.

The catalysed reaction is GTP + H2O = 7,8-dihydroneopterin 3'-triphosphate + formate + H(+). It functions in the pathway cofactor biosynthesis; 7,8-dihydroneopterin triphosphate biosynthesis; 7,8-dihydroneopterin triphosphate from GTP: step 1/1. In terms of biological role, converts GTP to 7,8-dihydroneopterin triphosphate. This Cupriavidus metallidurans (strain ATCC 43123 / DSM 2839 / NBRC 102507 / CH34) (Ralstonia metallidurans) protein is GTP cyclohydrolase FolE2 2.